We begin with the raw amino-acid sequence, 180 residues long: Ribulose bisphosphate carboxylase small subunit, chloroplastic 2 (180 aa).

Residues 1-56 constitute a chloroplast transit peptide; it reads MASSVMSSAAVATSTNAAQASMVAPFTGLKSAASFPVSRKQNLDITSIASNGGRVQ.

Belongs to the RuBisCO small chain family. Heterohexadecamer of 8 large and 8 small subunits.

The protein localises to the plastid. It is found in the chloroplast. Functionally, ruBisCO catalyzes two reactions: the carboxylation of D-ribulose 1,5-bisphosphate, the primary event in carbon dioxide fixation, as well as the oxidative fragmentation of the pentose substrate. Both reactions occur simultaneously and in competition at the same active site. Although the small subunit is not catalytic it is essential for maximal activity. This chain is Ribulose bisphosphate carboxylase small subunit, chloroplastic 2, found in Petunia hybrida (Petunia).